A 593-amino-acid chain; its full sequence is Chromodomain Y-like protein (593 aa).

Positions Met-1–Gln-14 are enriched in polar residues. A disordered region spans residues Met-1–Thr-30. Residues Thr-56–Ser-116 enclose the Chromo domain. The tract at residues Thr-56–Thr-304 is interaction with EZH2. At Ser-83 the chain carries Phosphoserine. Residues Glu-110 to Ser-158 form a disordered region. Over residues Leu-117–Arg-129 the composition is skewed to low complexity. At Lys-130 the chain carries N6,N6,N6-trimethyllysine; by EHMT2; alternate. Lys-130 carries the N6,N6-dimethyllysine; by EHMT2; alternate modification. Residue Lys-130 is modified to N6-methyllysine; by EHMT2; alternate. Polar residues predominate over residues Ser-133–Lys-146. Residues Ser-165, Ser-196, and Ser-211 each carry the phosphoserine modification. The segment at Gly-200 to Glu-223 is disordered. The acetyl-CoA-binding domain stretch occupies residues Ser-357–Lys-589.

As to quaternary structure, forms multimers and multimerization is required for stable binding to chromatin. Interacts with HDAC1 and HDAC2 via its C-terminal acetyl-CoA-binding domain. Interacts with EZH2, EED, SUZ12, REST, EHMT1 and EHMT2. Part of a complex containing at least CDYL, REST, WIZ, SETB1, EHMT1 and EHMT2. Part of a complex containing at least CDYL, MIER1, MIER2, HDAC1 and HDAC2. Interacts with CHAF1A and CHAF1B; bridging the CAF-1 complex to the MCM2-7 (MCM) complex. Interacts with MCM3 and MCM5; bridging the CAF-1 complex to the MCM2-7 (MCM) complex. Interacts with EHMT2 and PRDM9; interaction only takes place when PRDM9 is bound to hotspot DNA. Highly expressed in testis (at protein level). Expressed in the hippocampus (at protein level). Expressed in the medial prefrontal cortex, prelimbic cortex, intralimbic cortex and cingulate cortex area (at protein level). Isoform 1: Expressed as 2 transcripts encoding the same protein, a ubiquitous transcript and a highly expressed testis-specific transcript.

The protein localises to the nucleus. It localises to the chromosome. It catalyses the reaction L-lysyl-[protein] + acetyl-CoA = N(6)-acetyl-L-lysyl-[protein] + CoA + H(+). The enzyme catalyses 3-hydroxybutanoyl-CoA = (2E)-butenoyl-CoA + H2O. Functionally, chromatin reader protein that recognizes and binds histone H3 trimethylated at 'Lys-9', dimethylated at 'Lys-27' and trimethylated at 'Lys-27' (H3K9me3, H3K27me2 and H3K27me3, respectively). Part of multimeric repressive chromatin complexes, where it is required for transmission and restoration of repressive histone marks, thereby preserving the epigenetic landscape. Required for chromatin targeting and maximal enzymatic activity of Polycomb repressive complex 2 (PRC2); acts as a positive regulator of PRC2 activity by bridging the pre-existing histone H3K27me3 and newly recruited PRC2 on neighboring nucleosomes. Acts as a corepressor for REST by facilitating histone-lysine N-methyltransferase EHMT2 recruitment and H3K9 dimethylation at REST target genes for repression. Involved in X chromosome inactivation in females: recruited to Xist RNA-coated X chromosome and facilitates propagation of H3K9me2 by anchoring EHMT2. Promotes EZH2 accumulation and H3K27me3 methylation at DNA double strand breaks (DSBs), thereby facilitating transcriptional repression at sites of DNA damage and homology-directed repair of DSBs. Required for neuronal migration during brain development by repressing expression of RHOA. By repressing the expression of SCN8A, contributes to the inhibition of intrinsic neuronal excitability and epileptogenesis. In addition to acting as a chromatin reader, acts as a hydro-lyase. Shows crotonyl-coA hydratase activity by mediating the conversion of crotonyl-CoA ((2E)-butenoyl-CoA) to beta-hydroxybutyryl-CoA (3-hydroxybutanoyl-CoA), thereby acting as a negative regulator of histone crotonylation. Histone crotonylation is required during spermatogenesis; down-regulation of histone crotonylation by CDYL regulates the reactivation of sex chromosome-linked genes in round spermatids and histone replacement in elongating spermatids. By regulating histone crotonylation and trimethylation of H3K27, may be involved in stress-induced depression-like behaviors, possibly by regulating VGF expression. May have histone acetyltransferase activity; such activity is however unsure in vivo. Not able to recognize and bind histone H3K9me3, histone H3K27me2 and histone H3K27me3, due to the presence of a N-terminal extension that inactivates the chromo domain. The chain is Chromodomain Y-like protein from Mus musculus (Mouse).